Here is a 191-residue protein sequence, read N- to C-terminus: dTTP/UTP pyrophosphatase (191 aa).

D71 acts as the Proton acceptor in catalysis.

It belongs to the Maf family. YhdE subfamily. The cofactor is a divalent metal cation.

The protein localises to the cytoplasm. The catalysed reaction is dTTP + H2O = dTMP + diphosphate + H(+). It carries out the reaction UTP + H2O = UMP + diphosphate + H(+). In terms of biological role, nucleoside triphosphate pyrophosphatase that hydrolyzes dTTP and UTP. May have a dual role in cell division arrest and in preventing the incorporation of modified nucleotides into cellular nucleic acids. In Hyphomonas neptunium (strain ATCC 15444), this protein is dTTP/UTP pyrophosphatase.